The chain runs to 124 residues: Heat-labile enterotoxin B chain (124 aa).

An N-terminal signal peptide occupies residues 1–21 (MNKVKFYVLFTALLSSLCAHG). A disulfide bridge connects residues Cys-30 and Cys-107.

Heterohexamer of one A chain and of five B chains.

In terms of biological role, the biological activity of the toxin is produced by the A chain, which activates intracellular adenyl cyclase. This is Heat-labile enterotoxin B chain (eltB) from Escherichia coli.